The primary structure comprises 385 residues: MPANNSLLIFRDEINNIDKKIVKLLAERKNLVFKIAQSKIENNQAIRDIEREKKMLQKLIFLGKKYNLKSEYITQLFQLIIEESVATQKKLLKKFCNHNKLIPANFSFLGPKGSYSHIAAYKYADLNFQKCITNECSTFEEVVLSVENNQSDYAVLPIENTCSGSINEVFDILKKTNLFIIGEINIFINHNLLTLKKIELNKIKTIYSHPQPFQQCSDFIKKFPEWKIKYTKSTADAMKKIKKYNDVTNAALGSEIGSKIYGLEILMKNLANKENNITRFILLNRNPKKISKNIPTTTTLIFTTGQEAGSLSKVLSILQEKKLIMKKLTSQKIYKNPWEEMFYIDIQVNLSSTLMQDALEKIKKITRFIKILGCYPSEKITPIAP.

Residues M1 to L92 form the Chorismate mutase domain. R11, R28, K39, D48, E52, S84, and Q88 together coordinate substrate. The Prephenate dehydratase domain occupies N105 to R285. The interval N286–P385 is regulatory. The ACT domain maps to T299–P376.

The protein resides in the cytoplasm. It catalyses the reaction chorismate = prephenate. The enzyme catalyses prephenate + H(+) = 3-phenylpyruvate + CO2 + H2O. Its pathway is amino-acid biosynthesis; L-phenylalanine biosynthesis; phenylpyruvate from prephenate: step 1/1. It functions in the pathway metabolic intermediate biosynthesis; prephenate biosynthesis; prephenate from chorismate: step 1/1. Catalyzes the Claisen rearrangement of chorismate to prephenate and the decarboxylation/dehydration of prephenate to phenylpyruvate. The sequence is that of Bifunctional chorismate mutase/prephenate dehydratase (pheA) from Buchnera aphidicola subsp. Acyrthosiphon pisum (strain APS) (Acyrthosiphon pisum symbiotic bacterium).